We begin with the raw amino-acid sequence, 146 residues long: Gonadotropin subunit beta-2 (146 aa).

The signal sequence occupies residues 1–22 (MTVEISKVFVLMMLNLFLGASS). 6 disulfide bridges follow: Cys37–Cys85, Cys51–Cys100, Cys54–Cys138, Cys62–Cys116, Cys66–Cys118, and Cys121–Cys128. Residue Asn41 is glycosylated (N-linked (GlcNAc...) asparagine).

Belongs to the glycoprotein hormones subunit beta family. As to quaternary structure, heterodimer of an alpha and a beta chain.

It localises to the secreted. Its function is as follows. Involved in gametogenesis and steroidogenesis. This Trichopodus trichopterus (Three spot gourami) protein is Gonadotropin subunit beta-2 (cgbb).